Here is a 167-residue protein sequence, read N- to C-terminus: Ubiquitin-fold modifier-conjugating enzyme 1 (167 aa).

The active-site Glycyl thioester intermediate is Cys-116.

The protein belongs to the ubiquitin-conjugating enzyme family. UFC1 subfamily.

E2-like enzyme which forms an intermediate with UFM1 via a thioester linkage. This Anopheles gambiae (African malaria mosquito) protein is Ubiquitin-fold modifier-conjugating enzyme 1.